The chain runs to 5068 residues: Protein piccolo (5068 aa).

Low complexity predominate over residues 1-20 (MGNEASLEGEGLPEGLAAAA). Disordered stretches follow at residues 1–143 (MGNE…DFKE) and 173–524 (FDLI…QAPA). Residues 93–102 (PGKPPDPGRP) are compositionally biased toward pro residues. Basic and acidic residues-rich tracts occupy residues 111-122 (RTTDTFRSEQKL), 133-143 (KESKSRTDFKE), and 185-199 (ETTK…DQGK). Position 212 is a phosphoserine (Ser-212). Positions 232-241 (PSKSVSSQQA) are enriched in polar residues. Over residues 252-279 (AKPSQQSPAQTPAQQAKPVAQQPGPAKA) the composition is skewed to low complexity. Over residues 319–334 (TSLQQPGPKSLAQTPG) the composition is skewed to polar residues. Pro residues-rich tracts occupy residues 391-407 (PTKP…PQPQ) and 416-487 (PQQP…PQPQ). The tract at residues 401 to 500 (PAKPQPQQPV…LGKPSAQQPS (100 aa)) is 10 X 10 AA tandem approximate repeats of P-A-K-P-Q-P-Q-Q-P-X. Residues 495 to 508 (SAQQPSKSISQTVT) are compositionally biased toward polar residues. Residues 515 to 524 (PPTSAAQAPA) show a composition bias toward low complexity. The C4-type zinc finger occupies 532–556 (CPLCNTTELLLHTPEKANFNTCTEC). 4 disordered regions span residues 594–867 (AAIP…TVTG), 883–1005 (LIST…TELN), 1057–1345 (LGDM…PSDL), and 1364–1803 (VGEK…SDPE). Over residues 610 to 625 (QPATASKSPVPSQQAS) the composition is skewed to polar residues. The segment covering 626–644 (PKKELPSKQDSPKAPESKK) has biased composition (basic and acidic residues). Low complexity predominate over residues 709-738 (SPSSAAATSKPAILSSQVQAQAQVTTAPPL). Residues 782–795 (ESKDPVQKKEEPKK) are compositionally biased toward basic and acidic residues. The segment covering 809 to 830 (VPKGSPTPSGTRPTTGQATPQS) has biased composition (low complexity). Phosphoserine is present on residues Ser-844 and Ser-856. 2 stretches are compositionally biased toward polar residues: residues 856-865 (SQPTTPQETV) and 883-893 (LISTAGQQAPH). Thr-860 bears the Phosphothreonine mark. A C4-type zinc finger spans residues 997–1020 (CPLCRTELNVGSQDPPNFNTCTEC). Pro residues predominate over residues 1073–1085 (SPVPAPAEPPPQK). A compositionally biased stretch (basic and acidic residues) spans 1097-1116 (KETEVKAETEKQIPEKETPS). Residue Thr-1120 is modified to Phosphothreonine. Composition is skewed to basic and acidic residues over residues 1144-1165 (PEKK…KKPP), 1172-1186 (LEEK…KLPP), 1244-1253 (PKDRQKESRD), and 1262-1283 (TAKE…DKSD). Residues 1290–1306 (PKSPQGLSDTGYSSDGI) are compositionally biased toward polar residues. A phosphoserine mark is found at Ser-1292, Ser-1302, Ser-1303, Ser-1332, Ser-1334, Ser-1337, Ser-1338, and Ser-1341. Positions 1319–1333 (SDEKDLLKGLKKDSF) are enriched in basic and acidic residues. Over residues 1334-1343 (SQESSPSSPS) the composition is skewed to low complexity. Residues 1374–1392 (PQKVSPEQPQDQQKTQTPS) are compositionally biased toward polar residues. Residues 1405–1444 (KESQEKKVTSKKDSAQGFPSRKEHKENPELVDDLSPRRAS) are compositionally biased toward basic and acidic residues. Phosphoserine is present on residues Ser-1439, Ser-1451, Ser-1452, Ser-1454, Ser-1457, Ser-1481, Ser-1484, Ser-1505, and Ser-1507. Residues 1499–1511 (SADEDASGSEDEE) show a composition bias toward acidic residues. Thr-1552 is subject to Phosphothreonine. Phosphoserine is present on residues Ser-1553, Ser-1563, and Ser-1575. The segment covering 1566–1575 (DEDDETFDES) has biased composition (acidic residues). Positions 1576–1587 (PELKFRETKSQE) are enriched in basic and acidic residues. Over residues 1606–1624 (ELNSTVTDKYSAESSQKKT) the composition is skewed to polar residues. The segment covering 1628-1638 (FDEEPELEMES) has biased composition (acidic residues). The residue at position 1638 (Ser-1638) is a Phosphoserine. At Thr-1640 the chain carries Phosphothreonine. Ser-1642 and Ser-1647 each carry phosphoserine. The segment covering 1650–1667 (EGSSSLHASSFTPGTSPT) has biased composition (polar residues). A compositionally biased stretch (acidic residues) spans 1707-1720 (DSSEEEELREEEEL). 2 positions are modified to phosphoserine: Ser-1708 and Ser-1709. Residues 1721–1734 (LKEQEKQRELEQQQ) are compositionally biased toward basic and acidic residues. Thr-1760 is modified (phosphothreonine). Ser-1766 bears the Phosphoserine mark. Residues 1775–1790 (EELRQAAEMEELHRSS) are compositionally biased toward basic and acidic residues. Residues Ser-1795, Ser-1800, Ser-1808, and Ser-1829 each carry the phosphoserine modification. Disordered stretches follow at residues 2104 to 2126 (PSES…ISSV) and 2261 to 2377 (EAEL…AAAA). A compositionally biased stretch (low complexity) spans 2109 to 2126 (TSVPPSDTPSLTSSISSV). Polar residues predominate over residues 2277-2291 (TPSSQTKEQPGSPHS). Pro residues predominate over residues 2334–2368 (QPPPPPPPPPPPPPPPPPPPPPPLPPATSPKPPTY). Ser-2495 is subject to Phosphoserine. A glycan (O-linked (GlcNAc) threonine) is linked at Thr-2686. An O-linked (GlcNAc) serine glycan is attached at Ser-2960. A Phosphothreonine modification is found at Thr-2998. 2 disordered regions span residues 3334–3443 (KEEK…SKVS) and 3490–3556 (KGGS…LYSP). Residue Ser-3358 is modified to Phosphoserine. The span at 3361–3370 (DDPRNLKKIV) shows a compositional bias: basic and acidic residues. Ser-3372 is modified (phosphoserine). 2 positions are modified to phosphothreonine: Thr-3376 and Thr-3403. A compositionally biased stretch (acidic residues) spans 3403 to 3412 (TDDEDQDEWD). The segment covering 3495–3507 (GCQTETDPDTQSP) has biased composition (polar residues). Phosphoserine is present on residues Ser-3506, Ser-3514, Ser-3545, Ser-3549, Ser-3555, Ser-3558, Ser-3561, Ser-3582, Ser-3608, Ser-3610, and Ser-3616. Disordered stretches follow at residues 3576–3679 (PLPD…RRRM) and 3760–3797 (DYMS…QFIP). Composition is skewed to polar residues over residues 3636 to 3645 (KGSQTTSGTQ) and 3661 to 3673 (STGT…TMGT). Ser-3763 is subject to Phosphoserine. Positions 3773–3785 (SRVESQHGIERPR) are enriched in basic and acidic residues. Polar residues predominate over residues 3787–3797 (APQTEFSQFIP). Phosphoserine occurs at positions 4016, 4042, and 4132. 2 disordered regions span residues 4207 to 4231 (ADKP…GLDL) and 4254 to 4273 (VSFG…LPIS). Positions 4210-4231 (PYSSGSRSRPSSRPSSVYGLDL) are enriched in low complexity. Over residues 4257–4273 (GHSSSSARTKPTSLPIS) the composition is skewed to polar residues. Phosphoserine occurs at positions 4286, 4290, 4293, 4322, and 4358. The segment at 4317–4339 (RDQFGSSHSLPEVQQHMREESRT) is disordered. The PDZ domain occupies 4424-4518 (RIKITRDSKD…EAEICVRLDL (95 aa)). Positions 4574–4620 (KGAHAHSGPTSAGSSSVPSPGQPGSPSVSKKKHGGSKPTDVSKTASH) are disordered. Residues 4578-4601 (AHSGPTSAGSSSVPSPGQPGSPSV) show a composition bias toward low complexity. Residue Ser-4592 is modified to Phosphoserine. The C2 1 domain maps to 4622 to 4751 (ITGEIQLQIN…SHLDNTPRWY (130 aa)). Residues Asp-4651 and Asp-4657 each coordinate Ca(2+). The residue at position 4706 (Ser-4706) is a Phosphoserine. Ca(2+) contacts are provided by Asp-4721, Asp-4723, Ser-4726, and Asp-4729. 2 disordered regions span residues 4758–4834 (ESIE…SVAQ) and 4857–4891 (QPTK…SEGS). Low complexity-rich tracts occupy residues 4766-4778 (HSSQ…PKPS) and 4805-4815 (SSPGSSKSSSE). Polar residues predominate over residues 4823–4834 (PSRSQSKTSVAQ). Over residues 4870 to 4891 (SVSTGSSGSSVGSGYSVDSEGS) the composition is skewed to low complexity. One can recognise a C2 2 domain in the interval 4933–5058 (VMGEIKLALK…DLRKRIVNWH (126 aa)).

As to quaternary structure, interacts with BSN, ERC2/CAST1, RIMS1 and UNC13A. Interacts (via C-terminus) with TRIO (via N-terminus). Interacts with CTBP1. Interacts with SIAH1; this interaction negatively regulates SIAH1 E3 ligase activity. Directly interacts with GIT1 and GIT2. Ca(2+) is required as a cofactor. Highly expressed in brain. Moderately expressed in pituitary gland and pancreatic islets. Low levels found in stomach.

Its subcellular location is the presynaptic active zone. Scaffold protein of the presynaptic cytomatrix at the active zone (CAZ) which is the place in the synapse where neurotransmitter is released. After synthesis, participates in the formation of Golgi-derived membranous organelles termed Piccolo-Bassoon transport vesicles (PTVs) that are transported along axons to sites of nascent synaptic contacts. At the presynaptic active zone, regulates the spatial organization of synaptic vesicle cluster, the protein complexes that execute membrane fusion and compensatory endocytosis. Organizes as well the readily releasable pool of synaptic vesicles and safeguards a fraction of them to be not immediately available for action potential-induced release. Also functions in processes other than assembly such as the regulation of specific presynaptic protein ubiquitination by interacting with SIAH1 or the regulation of presynaptic autophagy. Also mediates synapse to nucleus communication leading to reconfiguration of gene expression by associating with the transcriptional corepressor CTBP1 and by subsequently reducing the size of its pool available for nuclear import. In Mus musculus (Mouse), this protein is Protein piccolo.